The chain runs to 425 residues: MERVFSVEEISDPFWVPPPPPQSAAAAQQQGGGGVASGGGGGVAGGGGGGNAMNRCPSEWYFQKFLEEAVLDSPVPNPSPRAEAGGIRGAGGVVPVDVKQPQLSAAAAAAATTSAVVDPVEYNAMLKQKLEKDLAAVAMWRASGTVPPERPGAGSSLLNADVSHIGAPNSIGGNATPVQNMLSGPSGGSGSQLVQNVDVLVKQPTSSSSREQSDDDDMEGEAETTGTARPADQRLQRRKQSNRESARRSRSRKAAHLNELEAQVSQLRVENSSLLRRLADVNQKYNDAAVDNRVLKADVETLRAKVKMAEDSVKRVTGMNALFPAASDMSSLSMPFNSSPSEATSDAAVPIQDDPNNYFATNNDIGGNNNYMPDIPSSAQEDEDFVNGALAAGKIGRTASLQRVASLEHLQKRMCGGPASSGSTS.

Disordered regions lie at residues 1 to 50 (MERV…GGGG) and 169 to 257 (NSIG…AAHL). Residues 30–50 (QGGGGVASGGGGGVAGGGGGG) show a composition bias toward gly residues. Residues 171–182 (IGGNATPVQNML) show a composition bias toward polar residues. The span at 213-222 (SDDDDMEGEA) shows a compositional bias: acidic residues. Positions 231 to 247 (ADQRLQRRKQSNRESAR) are enriched in basic and acidic residues. Residues 232–295 (DQRLQRRKQS…NDAAVDNRVL (64 aa)) enclose the bZIP domain. Residues 234-253 (RLQRRKQSNRESARRSRSRK) are basic motif. The segment at 260–274 (LEAQVSQLRVENSSL) is leucine-zipper. The disordered stretch occupies residues 334–354 (MPFNSSPSEATSDAAVPIQDD).

In terms of assembly, heterodimer with RISBZ1/BZIP58.

It localises to the nucleus. Functionally, transcriptional activator that binds to the DNA specific sequence 5'-GCCACGT[AC]AG-3' found in the alpha-globulin gene promoter. Does not bind to promoters of other major storage genes such as glutelin, prolamin and albumin. Binds to the DNA specific sequence 5'-TGAGTCA-3' found in seed storage protein gene promoters. The protein is bZIP transcription factor RISBZ2 of Oryza sativa subsp. japonica (Rice).